Reading from the N-terminus, the 248-residue chain is MLSILFIFGLILGSFYYTAGCRIPLHLSIIAPRSSCPFCRRTLTPAELIPILSFLFQKGKCKSCGHRISFMYPAAELVTACLFAAAGIRFGISLELFPAVVFISLLIIVAVTDIHFMLIPNRILIFFLPFLAAARLISPLDSWYAGLLGAAAGFLFLAVIAAITHGGVGGGDIKLFAVIGFVLGVKMLAAAFFFSVLIGALYGAAAVLTGRLAKRQPLPFAPAIAAGSILAYLYGDSIISFYIKMALG.

The chain crosses the membrane as a helical span at residues methionine 1–cysteine 21. Cysteine 36, cysteine 39, cysteine 61, and cysteine 64 together coordinate Zn(2+). 6 helical membrane passes run isoleucine 68–isoleucine 88, phenylalanine 90–alanine 110, isoleucine 114–alanine 134, tryptophan 143–isoleucine 163, valine 178–isoleucine 198, and alanine 223–isoleucine 243.

The protein belongs to the peptidase A24 family. Zn(2+) is required as a cofactor.

It localises to the cell membrane. It carries out the reaction Typically cleaves a -Gly-|-Phe- bond to release an N-terminal, basic peptide of 5-8 residues from type IV prepilin, and then N-methylates the new N-terminal amino group, the methyl donor being S-adenosyl-L-methionine.. Its function is as follows. Plays a role in type II pseudopili formation by proteolytically removing the leader sequence from substrate proteins and subsequently monomethylating the alpha-amino group of the newly exposed N-terminal phenylalanine. Substrates include proteins required for biogenesis of the type II general secretory apparatus. The protein is Prepilin leader peptidase/N-methyltransferase (comC) of Bacillus subtilis (strain 168).